Consider the following 102-residue polypeptide: Outer membrane protein assembly factor BamE (102 aa).

Residues 1-20 (MNNYIKALLIIICFSSCSIS) form the signal peptide.

This sequence belongs to the BamE family. As to quaternary structure, part of the Bam complex.

Its subcellular location is the cell outer membrane. Functionally, part of the outer membrane protein assembly complex, which is involved in assembly and insertion of beta-barrel proteins into the outer membrane. The chain is Outer membrane protein assembly factor BamE from Buchnera aphidicola subsp. Acyrthosiphon pisum (strain APS) (Acyrthosiphon pisum symbiotic bacterium).